We begin with the raw amino-acid sequence, 489 residues long: Protein nucleotidyltransferase YdiU (489 aa).

Residues G88, G90, R91, K111, D123, G124, R174, and R181 each coordinate ATP. The active-site Proton acceptor is the D250. Mg(2+) is bound by residues N251 and D260. Residue D260 participates in ATP binding.

It belongs to the SELO family. Mg(2+) is required as a cofactor. Mn(2+) serves as cofactor.

The catalysed reaction is L-seryl-[protein] + ATP = 3-O-(5'-adenylyl)-L-seryl-[protein] + diphosphate. It carries out the reaction L-threonyl-[protein] + ATP = 3-O-(5'-adenylyl)-L-threonyl-[protein] + diphosphate. It catalyses the reaction L-tyrosyl-[protein] + ATP = O-(5'-adenylyl)-L-tyrosyl-[protein] + diphosphate. The enzyme catalyses L-histidyl-[protein] + UTP = N(tele)-(5'-uridylyl)-L-histidyl-[protein] + diphosphate. The catalysed reaction is L-seryl-[protein] + UTP = O-(5'-uridylyl)-L-seryl-[protein] + diphosphate. It carries out the reaction L-tyrosyl-[protein] + UTP = O-(5'-uridylyl)-L-tyrosyl-[protein] + diphosphate. Its function is as follows. Nucleotidyltransferase involved in the post-translational modification of proteins. It can catalyze the addition of adenosine monophosphate (AMP) or uridine monophosphate (UMP) to a protein, resulting in modifications known as AMPylation and UMPylation. The chain is Protein nucleotidyltransferase YdiU from Vibrio parahaemolyticus serotype O3:K6 (strain RIMD 2210633).